Here is a 208-residue protein sequence, read N- to C-terminus: LexA repressor (208 aa).

Residues 28-48 (RAEIARELGFRSANAAEEHLK) constitute a DNA-binding region (H-T-H motif). Active-site for autocatalytic cleavage activity residues include S125 and K162.

This sequence belongs to the peptidase S24 family. Homodimer.

It catalyses the reaction Hydrolysis of Ala-|-Gly bond in repressor LexA.. Functionally, represses a number of genes involved in the response to DNA damage (SOS response), including recA and lexA. In the presence of single-stranded DNA, RecA interacts with LexA causing an autocatalytic cleavage which disrupts the DNA-binding part of LexA, leading to derepression of the SOS regulon and eventually DNA repair. The polypeptide is LexA repressor (Aliivibrio fischeri (strain MJ11) (Vibrio fischeri)).